The primary structure comprises 401 residues: Argininosuccinate synthase (401 aa).

9–17 (AYSGGLDTS) is an ATP binding site. L-citrulline is bound at residue Y86. G116 lines the ATP pocket. L-aspartate-binding residues include T118, N122, and D123. N122 provides a ligand contact to L-citrulline. R126, S174, S183, E259, and Y271 together coordinate L-citrulline.

This sequence belongs to the argininosuccinate synthase family. Type 1 subfamily. As to quaternary structure, homotetramer.

The protein resides in the cytoplasm. It catalyses the reaction L-citrulline + L-aspartate + ATP = 2-(N(omega)-L-arginino)succinate + AMP + diphosphate + H(+). It functions in the pathway amino-acid biosynthesis; L-arginine biosynthesis; L-arginine from L-ornithine and carbamoyl phosphate: step 2/3. This Bacillus cereus (strain B4264) protein is Argininosuccinate synthase.